Here is a 252-residue protein sequence, read N- to C-terminus: Ubiquitin carboxyl-terminal hydrolase isozyme L1 (252 aa).

Met-1 is subject to N-acetylmethionine. The 249-residue stretch at 2 to 250 (QLKPMEINPE…VRFSAVALCK (249 aa)) folds into the UCH catalytic domain. An interaction with ubiquitin region spans residues 5 to 10 (PMEINP). Cys-119 acts as the Nucleophile in catalysis. At Ser-154 the chain carries Phosphoserine. Catalysis depends on His-190, which acts as the Proton donor. The segment at 240–245 (EVRFSA) is interaction with ubiquitin. Cys-249 is lipidated: S-farnesyl cysteine. The propeptide at 250–252 (KAA) is removed in mature form.

This sequence belongs to the peptidase C12 family. As to quaternary structure, monomer. Homodimer. Interacts with COPS5 and SNCA. O-glycosylated. In terms of tissue distribution, neurons and cells of the diffuse neuroendocrine system and their tumors.

It localises to the cytoplasm. Its subcellular location is the endoplasmic reticulum membrane. It carries out the reaction Thiol-dependent hydrolysis of ester, thioester, amide, peptide and isopeptide bonds formed by the C-terminal Gly of ubiquitin (a 76-residue protein attached to proteins as an intracellular targeting signal).. Ubiquitin-protein hydrolase involved both in the processing of ubiquitin precursors and of ubiquitinated proteins. This enzyme is a thiol protease that recognizes and hydrolyzes a peptide bond at the C-terminal glycine of ubiquitin. Also binds to free monoubiquitin and may prevent its degradation in lysosomes. The homodimer may have ATP-independent ubiquitin ligase activity. The sequence is that of Ubiquitin carboxyl-terminal hydrolase isozyme L1 (UCHL1) from Bos taurus (Bovine).